Consider the following 410-residue polypeptide: Peptidase T (410 aa).

His-78 is a Zn(2+) binding site. Asp-80 is an active-site residue. Asp-140 lines the Zn(2+) pocket. Glu-173 acts as the Proton acceptor in catalysis. Positions 174, 196, and 379 each coordinate Zn(2+).

The protein belongs to the peptidase M20B family. Zn(2+) is required as a cofactor.

The protein resides in the cytoplasm. The enzyme catalyses Release of the N-terminal residue from a tripeptide.. Its function is as follows. Cleaves the N-terminal amino acid of tripeptides. This Pectobacterium atrosepticum (strain SCRI 1043 / ATCC BAA-672) (Erwinia carotovora subsp. atroseptica) protein is Peptidase T.